The sequence spans 235 residues: Large ribosomal subunit protein uL1 (235 aa).

The protein belongs to the universal ribosomal protein uL1 family. As to quaternary structure, part of the 50S ribosomal subunit.

Functionally, binds directly to 23S rRNA. The L1 stalk is quite mobile in the ribosome, and is involved in E site tRNA release. Protein L1 is also a translational repressor protein, it controls the translation of the L11 operon by binding to its mRNA. The polypeptide is Large ribosomal subunit protein uL1 (Synechococcus sp. (strain CC9902)).